The following is a 155-amino-acid chain: Large ribosomal subunit protein eL24 (155 aa).

Residues 97–129 (KPEIRKAKRDEKAKADKEKKKADKAARKADKAK) are compositionally biased toward basic and acidic residues. The tract at residues 97–155 (KPEIRKAKRDEKAKADKEKKKADKAARKADKAKSAATQASKISKQQAKGAFQKVAATSR) is disordered. The span at 133 to 142 (TQASKISKQQ) shows a compositional bias: polar residues.

It belongs to the eukaryotic ribosomal protein eL24 family.

The protein is Large ribosomal subunit protein eL24 (RPL24) of Eremothecium gossypii (strain ATCC 10895 / CBS 109.51 / FGSC 9923 / NRRL Y-1056) (Yeast).